Consider the following 218-residue polypeptide: Pyridoxal phosphate homeostasis protein (218 aa).

An N6-(pyridoxal phosphate)lysine modification is found at lysine 25.

The protein belongs to the pyridoxal phosphate-binding protein YggS/PROSC family.

Pyridoxal 5'-phosphate (PLP)-binding protein, which is involved in PLP homeostasis. The polypeptide is Pyridoxal phosphate homeostasis protein (Synechocystis sp. (strain ATCC 27184 / PCC 6803 / Kazusa)).